Here is a 735-residue protein sequence, read N- to C-terminus: MCSTNPGKWVTFDDDPAVQSSQKSKNFPLENQGVCRPNGLKLNLPGLREFPSGSSSTSSTPLSSPIVDFYFSPGPPSNSPLSTPTKDFPGFPGIPKAGTHVLYPIPESSSDSPLAISGGESSLLPTRPTCLSHALLPSDHSCTHPTPKVGLPDEVNPQQAESLGFQSDDLPQFQYFREDCAFSSPFWKDEGSDSHFTLDPPGSKKMFSSRNKEMPIDQKSLNKCSLNYICEKLEHLQSAENQDSLRSLSMHCLCAEENASSFVPHTLFRSQPKSGWSFMLRIPEKKNMMSSRQWGPIFLKVLPGGILQMYYEQGLEKPFKEIQLDPYCRLSEPKVENFSVAGKIHTVKIEHVSYTEKRKYHSKTEVVHEPDIEQMLKLGSTSYHDFLDFLTTVEEELMKLPAVSKPKKNYEEQEISLEIVDNFWGKVTKEGKFVESAVITQIYCLCFVNGNLECFLTLNDLELPKRDESYYEKDSEKKGIDILDYHFHKCVNVQEFEQSRIIKFVPLDACRFELMRFKTLYNGDNLPFSLKSVVVVQGAYVELQAFVNMASLAQRSSYAGSLRSCDNIRIHFPVPSQWIKALWTMNLQRQKSLKAKMNRRACLGSLQELESEPVIQVTVGSAKYESAYQAVVWKIDRLPDKNSSLDHPHCLSYKLELGSDQEIPSDWYPFATVQFSVPDTCASRTEVRSLGVESDVQPQKHVQQRACYNIQVEIEKKWIKIDGEDPDKIGDCITQ.

The interval 1–35 is disordered; the sequence is MCSTNPGKWVTFDDDPAVQSSQKSKNFPLENQGVC. Positions 275 to 408 constitute an SHD domain; that stretch reads GWSFMLRIPE…KLPAVSKPKK (134 aa). The region spanning 412–715 is the MHD domain; the sequence is EQEISLEIVD…ACYNIQVEIE (304 aa).

This sequence belongs to the Stoned B family. As to expression, ubiquitous.

The protein resides in the cytoplasm. The protein localises to the membrane. May be involved in the endocytic machinery. In Homo sapiens (Human), this protein is Stonin-1 (STON1).